Consider the following 350-residue polypeptide: Dihydroorotase (350 aa).

Zn(2+)-binding residues include H17 and H19. Substrate contacts are provided by residues 19–21 (HLR) and N45. K103, H140, and H178 together coordinate Zn(2+). Position 103 is an N6-carboxylysine (K103). H140 lines the substrate pocket. Substrate is bound at residue L223. Residue D251 coordinates Zn(2+). The active site involves D251. Residues H255 and A267 each contribute to the substrate site.

Belongs to the metallo-dependent hydrolases superfamily. DHOase family. Class II DHOase subfamily. As to quaternary structure, homodimer. The cofactor is Zn(2+).

It catalyses the reaction (S)-dihydroorotate + H2O = N-carbamoyl-L-aspartate + H(+). Its pathway is pyrimidine metabolism; UMP biosynthesis via de novo pathway; (S)-dihydroorotate from bicarbonate: step 3/3. Catalyzes the reversible cyclization of carbamoyl aspartate to dihydroorotate. The sequence is that of Dihydroorotase from Erwinia tasmaniensis (strain DSM 17950 / CFBP 7177 / CIP 109463 / NCPPB 4357 / Et1/99).